The following is a 505-amino-acid chain: Trans-cinnamate 4-monooxygenase (505 aa).

A helical membrane pass occupies residues 3-23 (LLLLEKSLIAVFVAVILATVI). (E)-cinnamate is bound by residues 213–218 (RSRLAQ) and A306. C447 lines the heme pocket.

The protein belongs to the cytochrome P450 family. Requires heme as cofactor. As to expression, expressed in roots, leaves, stems, flowers and siliques.

It is found in the membrane. It catalyses the reaction (E)-cinnamate + reduced [NADPH--hemoprotein reductase] + O2 = (E)-4-coumarate + oxidized [NADPH--hemoprotein reductase] + H2O + H(+). It functions in the pathway phenylpropanoid metabolism; trans-4-coumarate biosynthesis; trans-4-coumarate from trans-cinnamate: step 1/1. Functionally, catalyzes the first oxidative step of the phenylpropanoid pathway in higher plants by transforming trans-cinnamate into p-coumarate. The compounds formed by this pathway are essential components for lignification, pollination, and defense against ultraviolet light, predators and pathogens. This chain is Trans-cinnamate 4-monooxygenase, found in Arabidopsis thaliana (Mouse-ear cress).